A 477-amino-acid chain; its full sequence is Glycogen synthase (477 aa).

Residue K15 coordinates ADP-alpha-D-glucose.

Belongs to the glycosyltransferase 1 family. Bacterial/plant glycogen synthase subfamily.

The catalysed reaction is [(1-&gt;4)-alpha-D-glucosyl](n) + ADP-alpha-D-glucose = [(1-&gt;4)-alpha-D-glucosyl](n+1) + ADP + H(+). It functions in the pathway glycan biosynthesis; glycogen biosynthesis. Its function is as follows. Synthesizes alpha-1,4-glucan chains using ADP-glucose. This chain is Glycogen synthase, found in Citrobacter koseri (strain ATCC BAA-895 / CDC 4225-83 / SGSC4696).